Reading from the N-terminus, the 361-residue chain is Gibberellin 20 oxidase 1-D (361 aa).

Positions 199–299 constitute a Fe2OG dioxygenase domain; sequence GNDSIMRLNY…RKSLAFFLCP (101 aa). The Fe cation site is built by His224, Asp226, and His280. Residue Arg290 is part of the active site.

This sequence belongs to the iron/ascorbate-dependent oxidoreductase family. GA20OX subfamily. It depends on Fe cation as a cofactor. The cofactor is L-ascorbate. In terms of tissue distribution, expressed in nodes and the ear of the elongating stem.

It catalyses the reaction gibberellin A12 + 2 2-oxoglutarate + 3 O2 + H(+) = gibberellin A9 + 2 succinate + 3 CO2 + 2 H2O. It carries out the reaction gibberellin A53 + 2 2-oxoglutarate + 3 O2 + H(+) = gibberellin A20 + 2 succinate + 3 CO2 + 2 H2O. Key oxidase enzyme in the biosynthesis of gibberellin that catalyzes the conversion of GA12 and GA53 to GA9 and GA20 respectively, via a three-step oxidation at C-20 of the GA skeleton. This Triticum aestivum (Wheat) protein is Gibberellin 20 oxidase 1-D (GA20ox1D).